We begin with the raw amino-acid sequence, 201 residues long: ATP-dependent Clp protease proteolytic subunit (201 aa).

Serine 100 serves as the catalytic Nucleophile. Histidine 125 is an active-site residue.

This sequence belongs to the peptidase S14 family. Component of the chloroplastic Clp protease core complex.

It localises to the plastid. It is found in the chloroplast stroma. The enzyme catalyses Hydrolysis of proteins to small peptides in the presence of ATP and magnesium. alpha-casein is the usual test substrate. In the absence of ATP, only oligopeptides shorter than five residues are hydrolyzed (such as succinyl-Leu-Tyr-|-NHMec, and Leu-Tyr-Leu-|-Tyr-Trp, in which cleavage of the -Tyr-|-Leu- and -Tyr-|-Trp bonds also occurs).. Functionally, cleaves peptides in various proteins in a process that requires ATP hydrolysis. Has a chymotrypsin-like activity. Plays a major role in the degradation of misfolded proteins. The sequence is that of ATP-dependent Clp protease proteolytic subunit from Ranunculus macranthus (Large buttercup).